The sequence spans 550 residues: Hydroxylamine reductase (550 aa).

The [4Fe-4S] cluster site is built by Cys7, Cys10, Cys19, and Cys25. Positions 244, 268, 312, 405, 433, 458, 493, and 495 each coordinate hybrid [4Fe-2O-2S] cluster. Cys405 carries the post-translational modification Cysteine persulfide.

This sequence belongs to the HCP family. It depends on [4Fe-4S] cluster as a cofactor. Hybrid [4Fe-2O-2S] cluster serves as cofactor.

The protein resides in the cytoplasm. The catalysed reaction is A + NH4(+) + H2O = hydroxylamine + AH2 + H(+). In terms of biological role, catalyzes the reduction of hydroxylamine to form NH(3) and H(2)O. The protein is Hydroxylamine reductase of Porphyromonas gingivalis (strain ATCC 33277 / DSM 20709 / CIP 103683 / JCM 12257 / NCTC 11834 / 2561).